The following is a 575-amino-acid chain: Suppressor of tumorigenicity 7 protein-like (575 aa).

A run of 2 helical transmembrane segments spans residues 36–56 (GLAG…LYAL) and 80–100 (FYVA…IFEW). Positions 125-147 (GTESSISEPGSPSRNRENETSRQ) are disordered. Positions 126–137 (TESSISEPGSPS) are enriched in polar residues.

This sequence belongs to the ST7 family.

The protein localises to the membrane. The sequence is that of Suppressor of tumorigenicity 7 protein-like (ST7L) from Homo sapiens (Human).